The primary structure comprises 1001 residues: MGPPLPLLLLLLLPPPLPRALPAPASARGRQLPGRLGCLFEDGLCGSLETCVNDGVFGRCQKVPVMDTYRYEVPPGALLHLKVTLQKLSRTGFTWQDDYTQRVIAQELANLPKAYLWHGEASGPARSLQQNADNEKWFSLEREVALAKTLRRYLPYLELLSQTPTANAHSRIDHETRPAKGEDSSPENILTYVAHTSALTYPPATRAKYPDNLLRPFSRLQPDELSPKVDGDIDKQKLIAALGAYTAQRLPGENDPEPRYLVHGSARAPRPFSATALSQRWPPPPGDAKDSPSMDDDTLLQSLLKDLQQNSEVDRLGPLKEEKADSVAGAIQSDPAEGSQESHGRGAEGQPREQTDAPETMLQDHRLSEVDDPVYKEVNRLSFQLGDLLKDYGSPLLPEGPLLEKSSREEIKKSEQPEEVLSSEEETAGVEHVRSRTYSKDLFERKPNSEPQPRRLEDQFQNRAPELWEDEESLKLAAQGPPSGGLQLEVQPSEEQQGYILTGNNPLSPEKGKQLMDQVAHILRVPSSFFADIKVLGPAVTFKVSANIQNMTTADVIKAAADNKDQLEKATGLTILQSGIRPKGKLKLLPHQEEQEDSTKFILLTFLSIACILGVLLASSLAYCLRHNSHYKLKDKLSGLGADPSADATEAYQELCRQRMAIRPQDRSEGPHTSRINSVSSQFSDGPMPSPSARSSTSSWSEEPVQSNMDISTGHMILAYMEDHLKNKNRLEKEWEALCAYQAEPNSSLVAQREENAPKNRSLAVLTYDHSRILLKSQNSHGSSDYINASPIMDHDPRNPAYIATQGPLPATVADFWQMVWESGCAVIVMLTPLSENGVRQCHHYWPDEGSNLYHVYEVNLVSEHIWCQDFLVRSFYLKNLQTNETRTVTQFHFLSWYDQGVPSSTRSLLDFRRKVNKCYRGRSCPIIVHCSDGAGRSGTYVLIDMVLNKMAKGAKEIDIAATLEHLRDQRPGMVQTKEQFEFALTAVAEEVNAILKALPQ.

Residues 1 to 27 form the signal peptide; sequence MGPPLPLLLLLLLPPPLPRALPAPASA. Positions 1-407 are involved in localization to secretory granules; interaction with CPE; the sequence is MGPPLPLLLL…PEGPLLEKSS (407 aa). Topologically, residues 28–600 are extracellular; it reads RGRQLPGRLG…HQEEQEDSTK (573 aa). At Arg259 the chain carries Omega-N-methylarginine. 3 disordered regions span residues 271-296, 308-359, and 394-459; these read PFSATALSQRWPPPPGDAKDSPSMDD, QQNS…DAPE, and SPLL…LEDQ. Residues 312 to 325 show a composition bias toward basic and acidic residues; that stretch reads EVDRLGPLKEEKAD. Position 339 is a phosphoserine (Ser339). The span at 340–355 shows a compositional bias: basic and acidic residues; sequence QESHGRGAEGQPREQT. Residues 394 to 404 show a composition bias toward low complexity; it reads SPLLPEGPLLE. Residues 405–416 show a composition bias toward basic and acidic residues; that stretch reads KSSREEIKKSEQ. The span at 417-428 shows a compositional bias: acidic residues; the sequence is PEEVLSSEEETA. A phosphoserine mark is found at Ser422 and Ser423. Positions 429 to 459 are enriched in basic and acidic residues; sequence GVEHVRSRTYSKDLFERKPNSEPQPRRLEDQ. Asn550 carries an N-linked (GlcNAc...) asparagine glycan. The helical transmembrane segment at 601-621 threads the bilayer; the sequence is FILLTFLSIACILGVLLASSL. The Cytoplasmic portion of the chain corresponds to 622–1001; that stretch reads AYCLRHNSHY…VNAILKALPQ (380 aa). The Tyrosine-based internalization motif signature appears at 652-661; the sequence is YQELCRQRMA. The segment at 663-705 is disordered; it reads RPQDRSEGPHTSRINSVSSQFSDGPMPSPSARSSTSSWSEEPV. Positions 674–684 are enriched in polar residues; sequence SRINSVSSQFS. Residues Ser678 and Ser684 each carry the phosphoserine modification. Over residues 691 to 705 the composition is skewed to low complexity; it reads PSARSSTSSWSEEPV. Thr697 bears the Phosphothreonine mark. A Tyrosine-protein phosphatase domain is found at 731-991; the sequence is LEKEWEALCA…EFALTAVAEE (261 aa). Substrate-binding positions include Asp899 and 931–937; that span reads CSDGAGR. Cys931 (phosphocysteine intermediate) is an active-site residue. Lys956 is modified (N6-acetyllysine). Gln976 provides a ligand contact to substrate. Residues 990–996 carry the Leucine-based sorting signal motif; sequence EEVNAIL.

The protein belongs to the protein-tyrosine phosphatase family. Self-associates. Interacts (via cytoplasmic domain) with PTPRN (via cytoplasmic domain). Interacts (precursor form) with CPE. Interacts with HAP1 isoform A. Interacts with AP2A1 or AP2A2 and AP1G1; indicative for an association with adaptor protein complex 2 (AP-2) and adaptor protein complex 1 (AP-1). Interacts with AP2M1; indicative for an association with adaptor protein complex 2 (AP-2). Interacts with MYO5A. Subject to proteolytic cleavage at multiple sites during maturation of secretory granules. In the brain at least IA-2beta71, IA-2beta64 and IA-2beta60 have been detected, in the pancreas and a pancreatic beta cell line only IA-2beta60 has been detected. As to expression, detected in brain. Detected in pancreas islets (at protein level). Detected in pancreas and brain.

It localises to the cytoplasmic vesicle. It is found in the secretory vesicle membrane. The protein resides in the secretory vesicle. Its subcellular location is the synaptic vesicle membrane. The enzyme catalyses O-phospho-L-tyrosyl-[protein] + H2O = L-tyrosyl-[protein] + phosphate. Plays a role in vesicle-mediated secretory processes. Required for normal accumulation of secretory vesicles in hippocampus, pituitary and pancreatic islets. Required for the accumulation of normal levels of insulin-containing vesicles and preventing their degradation. Plays a role in insulin secretion in response to glucose stimuli. Required for normal accumulation of the neurotransmitters norepinephrine, dopamine and serotonin in the brain. In females, but not in males, required for normal accumulation and secretion of pituitary hormones, such as luteinizing hormone (LH) and follicle-stimulating hormone (FSH). Required to maintain normal levels of renin expression and renin release. May regulate catalytic active protein-tyrosine phosphatases such as PTPRA through dimerization. Has phosphatidylinositol phosphatase activity; the PIPase activity is involved in its ability to regulate insulin secretion. Can dephosphorylate phosphatidylinositol 4,5-biphosphate (PI(4,5)P2), phosphatidylinositol 5-phosphate and phosphatidylinositol 3-phosphate. Regulates PI(4,5)P2 level in the plasma membrane and localization of cofilin at the plasma membrane and thus is indirectly involved in regulation of actin dynamics related to cell migration and metastasis; upon hydrolysis of PI(4,5)P2 cofilin is released from the plasma membrane and acts in the cytoplasm in severing F-actin filaments. This is Receptor-type tyrosine-protein phosphatase N2 (Ptprn2) from Mus musculus (Mouse).